Reading from the N-terminus, the 132-residue chain is UPF0299 membrane protein YohJ (132 aa).

4 consecutive transmembrane segments (helical) span residues 7–27, 31–51, 63–83, and 93–113; these read IIWQ…AGIF, LLPV…VLLA, GCYV…VGVM, and FGPV…VMSW.

Belongs to the UPF0299 family.

The protein localises to the cell inner membrane. This Shigella dysenteriae serotype 1 (strain Sd197) protein is UPF0299 membrane protein YohJ.